Consider the following 220-residue polypeptide: Thiopurine S-methyltransferase (220 aa).

S-adenosyl-L-methionine-binding residues include tryptophan 14, leucine 49, glutamate 70, and arginine 127.

This sequence belongs to the class I-like SAM-binding methyltransferase superfamily. TPMT family.

It is found in the cytoplasm. The enzyme catalyses S-adenosyl-L-methionine + a thiopurine = S-adenosyl-L-homocysteine + a thiopurine S-methylether.. The sequence is that of Thiopurine S-methyltransferase from Gluconobacter oxydans (strain 621H) (Gluconobacter suboxydans).